A 636-amino-acid polypeptide reads, in one-letter code: Chaperone protein DnaK (636 aa).

Thr-203 carries the post-translational modification Phosphothreonine; by autocatalysis. Residues 602–636 (VYGKQQEGAPAQEEPSAEGKKADDEGTVEGEFREV) are disordered. The span at 618 to 636 (AEGKKADDEGTVEGEFREV) shows a compositional bias: basic and acidic residues.

Belongs to the heat shock protein 70 family.

Acts as a chaperone. The chain is Chaperone protein DnaK from Dehalococcoides mccartyi (strain CBDB1).